Here is a 188-residue protein sequence, read N- to C-terminus: UPF0157 protein DR_2534 (188 aa).

Residues M1–R12 are compositionally biased toward gly residues. The tract at residues M1–D37 is disordered.

It belongs to the UPF0157 (GrpB) family.

This Deinococcus radiodurans (strain ATCC 13939 / DSM 20539 / JCM 16871 / CCUG 27074 / LMG 4051 / NBRC 15346 / NCIMB 9279 / VKM B-1422 / R1) protein is UPF0157 protein DR_2534.